The primary structure comprises 1089 residues: Platelet-derived growth factor receptor alpha (1089 aa).

The first 24 residues, Met-1–Gln-24, serve as a signal peptide directing secretion. Ig-like C2-type domains are found at residues Leu-25–Glu-113, Ile-117–Ser-201, Glu-202–Thr-306, Pro-319–Ser-410, and Pro-414–Val-517. At Leu-25–Ala-528 the chain is on the extracellular side. N-linked (GlcNAc...) asparagine glycans are attached at residues Asn-42, Asn-76, Asn-89, Asn-103, and Asn-179. Cysteines 49 and 100 form a disulfide. 2 disulfides stabilise this stretch: Cys-150-Cys-189 and Cys-235-Cys-290. 5 N-linked (GlcNAc...) asparagine glycosylation sites follow: Asn-353, Asn-359, Asn-458, Asn-468, and Asn-506. An intrachain disulfide couples Cys-435 to Cys-501. Residues Ala-529 to Trp-549 traverse the membrane as a helical segment. Topologically, residues Lys-550–Leu-1089 are cytoplasmic. 2 positions are modified to phosphotyrosine; by autocatalysis: Tyr-572 and Tyr-574. In terms of domain architecture, Protein kinase spans Leu-593–Leu-954. ATP-binding positions include Leu-599 to Val-607 and Lys-627. Residues Tyr-720, Tyr-731, Tyr-742, Tyr-754, Tyr-762, and Tyr-768 each carry the phosphotyrosine; by autocatalysis modification. The active-site Proton acceptor is the Asp-818. A phosphotyrosine; by autocatalysis mark is found at Tyr-849, Tyr-988, and Tyr-1018. Residues Tyr-1018–Leu-1089 form a disordered region. The span at Ser-1041–Phe-1059 shows a compositional bias: polar residues. The segment covering Glu-1065–Leu-1089 has biased composition (acidic residues).

The protein belongs to the protein kinase superfamily. Tyr protein kinase family. CSF-1/PDGF receptor subfamily. In terms of assembly, interacts with homodimeric PDGFA, PDGFB and PDGFC, and with heterodimers formed by PDGFA and PDGFB. Monomer in the absence of bound ligand. Interaction with dimeric PDGFA, PDGFB and/or PDGFC leads to receptor dimerization, where both PDGFRA homodimers and heterodimers with PDGFRB are observed. Interacts (tyrosine phosphorylated) with SHB (via SH2 domain). Interacts (tyrosine phosphorylated) with SHF (via SH2 domain). Interacts (tyrosine phosphorylated) with SRC (via SH2 domain). Interacts (tyrosine phosphorylated) with PIK3R1. Interacts (tyrosine phosphorylated) with PLCG1 (via SH2 domain). Interacts (tyrosine phosphorylated) with CRK, GRB2 and GRB7. Interacts with CD248; this interaction promotes PDGF receptor signaling pathway. In terms of processing, ubiquitinated, leading to its internalization and degradation. Autophosphorylated on tyrosine residues upon ligand binding. Autophosphorylation occurs in trans, i.e. one subunit of the dimeric receptor phosphorylates tyrosine residues on the other subunit. Phosphorylation at Tyr-731 and Tyr-742 is important for interaction with PIK3R1. Phosphorylation at Tyr-720 and Tyr-754 is important for interaction with PTPN11. Phosphorylation at Tyr-762 is important for interaction with CRK. Phosphorylation at Tyr-572 and Tyr-574 is important for interaction with SRC and SRC family members. Phosphorylation at Tyr-988 and Tyr-1018 is important for interaction with PLCG1. In terms of tissue distribution, focally expressed in cortical interstitial cells and highly expressed in the interstitium of the papillary region. Also expressed by adventitial cells in arterial vessels. Up-regulated in areas of renal fibrosis. In mice with unilateral ureteral obstruction, expression in cortical interstitial cells becomes prominent at day 4 which increases progressively until day 14.

It is found in the cell membrane. Its subcellular location is the cell projection. It localises to the cilium. The protein localises to the golgi apparatus. The catalysed reaction is L-tyrosyl-[protein] + ATP = O-phospho-L-tyrosyl-[protein] + ADP + H(+). Present in an inactive conformation in the absence of bound ligand. Binding of PDGFA and/or PDGFB leads to dimerization and activation by autophosphorylation on tyrosine residues. Inhibited by imatinib, nilotinib and sorafenib. Its function is as follows. Tyrosine-protein kinase that acts as a cell-surface receptor for PDGFA, PDGFB and PDGFC and plays an essential role in the regulation of embryonic development, cell proliferation, survival and chemotaxis. Depending on the context, promotes or inhibits cell proliferation and cell migration. Plays an important role in the differentiation of bone marrow-derived mesenchymal stem cells. Required for normal skeleton development and cephalic closure during embryonic development. Required for normal development of the mucosa lining the gastrointestinal tract, and for recruitment of mesenchymal cells and normal development of intestinal villi. Plays a role in cell migration and chemotaxis in wound healing. Plays a role in platelet activation, secretion of agonists from platelet granules, and in thrombin-induced platelet aggregation. Binding of its cognate ligands - homodimeric PDGFA, homodimeric PDGFB, heterodimers formed by PDGFA and PDGFB or homodimeric PDGFC -leads to the activation of several signaling cascades; the response depends on the nature of the bound ligand and is modulated by the formation of heterodimers between PDGFRA and PDGFRB. Phosphorylates PIK3R1, PLCG1, and PTPN11. Activation of PLCG1 leads to the production of the cellular signaling molecules diacylglycerol and inositol 1,4,5-trisphosphate, mobilization of cytosolic Ca(2+) and the activation of protein kinase C. Phosphorylates PIK3R1, the regulatory subunit of phosphatidylinositol 3-kinase, and thereby mediates activation of the AKT1 signaling pathway. Mediates activation of HRAS and of the MAP kinases MAPK1/ERK2 and/or MAPK3/ERK1. Promotes activation of STAT family members STAT1, STAT3 and STAT5A and/or STAT5B. Receptor signaling is down-regulated by protein phosphatases that dephosphorylate the receptor and its down-stream effectors, and by rapid internalization of the activated receptor. The sequence is that of Platelet-derived growth factor receptor alpha (Pdgfra) from Mus musculus (Mouse).